The following is a 382-amino-acid chain: MLQEAKVSTHTSNPLSQSVPQYGHSFDEATRVERLDSAPESLASVASTKLKDTTVWYRLAIQSEWCSTPQVPHGGFLASLLLSALLEHQQSQQHPDPYTLSYDFLKVLSPGEAFISVTSLGKVSGSFTSIAAELYQSRKEKVLLGVSVRGSFVNLSKQQGKSVLPLHYGAVSKLEEVPVPHPRSWYLPPSQAMISRQLDLLVKLETQRRPFSDYFVRFHPDDVDTPQQEDYSEEHASADLQSSPHYCKGSRILPLRSSHSRRIDAKSIPMFGDFRRPAYENVIKQDPCHPHDVPTRKFAFPTLQYTIRFLAKVPHDTEWLHTQWRETVVDGRIISDVYITTEQGAEPVAICQLDSLMFDMQWALSTMPSAEKSKKSPEASQL.

Positions 1 to 20 (MLQEAKVSTHTSNPLSQSVP) are enriched in polar residues. Positions 1–22 (MLQEAKVSTHTSNPLSQSVPQY) are disordered.

The protein operates within secondary metabolite biosynthesis. In terms of biological role, part of the gene cluster that mediates the biosynthesis of the glycolipid biosurfactant ustilagic acid (UA). UA is a secreted cellobiose glycolipid that is toxic for many microorganisms and confers biocontrol activity to U.maydis. UA consists of 15,16-dihydroxypalmitic or 2,15,16-trihydroxypalmitic acid, which is O-glycosidically linked to cellobiose at its terminal hydroxyl group. In addition, the cellobiose moiety is acetylated and acylated with a short-chain hydroxy fatty acid. UA biosynthesis starts with omega-hydroxylation of palmitic acid catalyzed by the cytochrome P450 monooxygenase cyp1. Terminal hydroxylation of palmitic acid precedes subterminal hydroxylation catalyzed by the cytochrome P450 monooxygenase cyp2. Sequential glucosylation of the hydroxy fatty acid is probably catalyzed by the glycosyltransferase ugt1. The cellobiose lipid is further decorated by acetylation of the proximal glucose residue and by acylation with a short-chain beta-hydroxy fatty acid at the distal glucose residue. The acyltransferase uat1 may be a good candidate for catalyzing either acetylation or acylation of the cellobiose lipid. The fatty acid synthase fas2 may be involved in synthesis of the carbon backbone of the short-chain beta-hydroxy fatty acid esterified to the cellobiose disaccharide. The secreted UA consists of a mixture of both alpha-hydroxylated and non-hydroxylated glycolipids; therefore, alpha-hydroxylation of the long-chain fatty, catalyzed by the fatty acid hydroxylase ahd1, occurs late in UA biosynthesis and may be the last step before secretion. The protein is Ustilagic acid biosynthesis cluster protein orf2 of Mycosarcoma maydis (Corn smut fungus).